A 677-amino-acid chain; its full sequence is AP-2 complex subunit beta (677 aa).

Residues 597 to 677 (RLRTRDSNPS…PMTPETHLMD (81 aa)) form a disordered region. Residues 616–627 (KKYNHFHQKSQT) show a composition bias toward basic residues. Over residues 636–654 (RNSWNPSPFSDESNSNTFS) the composition is skewed to polar residues.

Belongs to the adaptor complexes large subunit family. As to quaternary structure, adaptor protein complex 2 (AP-2) is a heterotetramer composed of two large adaptins (alpha-type subunit apl3 and beta-type subunit apl1), a medium chain (mu-type subunit apm4) and a small adaptin (sigma-type subunit aps2).

It is found in the cell membrane. It localises to the membrane. The protein localises to the coated pit. Its function is as follows. Adaptins are components of the adaptor complexes which link clathrin to receptors in coated vesicles. Clathrin-associated protein complexes are believed to interact with the cytoplasmic tails of membrane proteins, leading to their selection and concentration. Beta adaptin is a subunit of the plasma membrane adaptor. The polypeptide is AP-2 complex subunit beta (apl1) (Schizosaccharomyces pombe (strain 972 / ATCC 24843) (Fission yeast)).